Consider the following 428-residue polypeptide: Adenylosuccinate synthetase (428 aa).

GTP contacts are provided by residues 12 to 18 (GDEGKGK) and 40 to 42 (GHT). D13 acts as the Proton acceptor in catalysis. Residues D13 and G40 each contribute to the Mg(2+) site. Residues 13 to 16 (DEGK), 38 to 41 (NAGH), T130, R144, Q224, T239, and R303 contribute to the IMP site. The Proton donor role is filled by H41. Residue 299-305 (VTTGRSR) participates in substrate binding. Residues R305, 331 to 333 (KID), and 413 to 415 (GVG) contribute to the GTP site.

It belongs to the adenylosuccinate synthetase family. In terms of assembly, homodimer. Requires Mg(2+) as cofactor.

It is found in the cytoplasm. The enzyme catalyses IMP + L-aspartate + GTP = N(6)-(1,2-dicarboxyethyl)-AMP + GDP + phosphate + 2 H(+). The protein operates within purine metabolism; AMP biosynthesis via de novo pathway; AMP from IMP: step 1/2. Plays an important role in the de novo pathway of purine nucleotide biosynthesis. Catalyzes the first committed step in the biosynthesis of AMP from IMP. This is Adenylosuccinate synthetase from Clostridium perfringens (strain 13 / Type A).